The sequence spans 352 residues: N-acetyl-gamma-glutamyl-phosphate reductase 1 (352 aa).

Belongs to the NAGSA dehydrogenase family. Type 1 subfamily.

Its subcellular location is the cytoplasm. The enzyme catalyses N-acetyl-L-glutamate 5-semialdehyde + phosphate + NADP(+) = N-acetyl-L-glutamyl 5-phosphate + NADPH + H(+). It functions in the pathway amino-acid biosynthesis; L-arginine biosynthesis; N(2)-acetyl-L-ornithine from L-glutamate: step 3/4. In terms of biological role, catalyzes the NADPH-dependent reduction of N-acetyl-5-glutamyl phosphate to yield N-acetyl-L-glutamate 5-semialdehyde. This chain is N-acetyl-gamma-glutamyl-phosphate reductase 1, found in Nostoc sp. (strain PCC 7120 / SAG 25.82 / UTEX 2576).